The primary structure comprises 445 residues: FAD-dependent monooxygenase sorC (445 aa).

A helical transmembrane segment spans residues 8 to 28; the sequence is PFEVAIVGGGITGLALAVGLL. N31 carries N-linked (GlcNAc...) asparagine glycosylation. FAD contacts are provided by E38 and R119. Residue R201 is part of the active site. D323 and A336 together coordinate FAD. An N-linked (GlcNAc...) asparagine glycan is attached at N358.

This sequence belongs to the paxM FAD-dependent monooxygenase family. It depends on FAD as a cofactor.

Its subcellular location is the membrane. It participates in secondary metabolite biosynthesis. Its function is as follows. FAD-dependent monooxygenase; part of the gene cluster that mediates the biosynthesis of sorbicillinoids, a diverse group of yellow secondary metabolites that restrict growth of competing pathogenic fungi but not of bacteria. Sorbicillinoids biosynthesis requires the action of two PKSs. SorA iteratively combines three acetyl units and the growing chain is modified by the ketoacyl reductase subunit, and optional by the enoyl reductase subunit in the second cycle. The polyketide is then handed over to the PKS SorB, which adds three more acetyl units, and two methyl groups. SorB releases an aldehyde, which undergoes spontaneous cyclization resulting in the formation of sorbicillin or 2',3'-dihydrosorbicillin. The monooxygenase sorC oxidizes sorbicillin and 2',3'-dihydrosorbicillin to 2',3'-dihydrosorbicillinol and sorbicillinol, respectively. The oxidoreductase sorD further converts sorbicillinol into oxosorbicillinol. Sorbicillinol is the building block for the other sorbicillinoids such as disorbicillinol, bisvertinolon, and dihydrobisvertinolone. This chain is FAD-dependent monooxygenase sorC, found in Penicillium rubens (strain ATCC 28089 / DSM 1075 / NRRL 1951 / Wisconsin 54-1255) (Penicillium chrysogenum).